The chain runs to 600 residues: NADH-quinone oxidoreductase subunit C/D (600 aa).

Residues 1–190 (MVNNMTDLTA…SPFELTKAKQ (190 aa)) form an NADH dehydrogenase I subunit C region. The tract at residues 214-600 (DFMFLNLGPN…IDFVMSDVDR (387 aa)) is NADH dehydrogenase I subunit D.

The protein in the N-terminal section; belongs to the complex I 30 kDa subunit family. In the C-terminal section; belongs to the complex I 49 kDa subunit family. As to quaternary structure, NDH-1 is composed of 13 different subunits. Subunits NuoB, CD, E, F, and G constitute the peripheral sector of the complex.

Its subcellular location is the cell inner membrane. It carries out the reaction a quinone + NADH + 5 H(+)(in) = a quinol + NAD(+) + 4 H(+)(out). Its function is as follows. NDH-1 shuttles electrons from NADH, via FMN and iron-sulfur (Fe-S) centers, to quinones in the respiratory chain. The immediate electron acceptor for the enzyme in this species is believed to be ubiquinone. Couples the redox reaction to proton translocation (for every two electrons transferred, four hydrogen ions are translocated across the cytoplasmic membrane), and thus conserves the redox energy in a proton gradient. This is NADH-quinone oxidoreductase subunit C/D from Escherichia coli O6:H1 (strain CFT073 / ATCC 700928 / UPEC).